We begin with the raw amino-acid sequence, 417 residues long: Gamma-glutamyl phosphate reductase (417 aa).

The protein belongs to the gamma-glutamyl phosphate reductase family.

The protein localises to the cytoplasm. It carries out the reaction L-glutamate 5-semialdehyde + phosphate + NADP(+) = L-glutamyl 5-phosphate + NADPH + H(+). It participates in amino-acid biosynthesis; L-proline biosynthesis; L-glutamate 5-semialdehyde from L-glutamate: step 2/2. Its function is as follows. Catalyzes the NADPH-dependent reduction of L-glutamate 5-phosphate into L-glutamate 5-semialdehyde and phosphate. The product spontaneously undergoes cyclization to form 1-pyrroline-5-carboxylate. This is Gamma-glutamyl phosphate reductase from Idiomarina loihiensis (strain ATCC BAA-735 / DSM 15497 / L2-TR).